Consider the following 339-residue polypeptide: MFFNRERELEKLLRLVSTEPNLITFVYGPINSGKTALMMEFIKKLPDDHIAFYINLRRTPITSYSDFVDVLFSVEFRNKVKTLKEAVSLVLSAGKETFGFPVPTELLARITKEKKPKNAFAYIVTLMEEVRKAGKRPILILDELQVIGDLKVDGSLIYELFNFFIHLTKESHLSHVFVVTSDSLFIERVYSEAMLQGRAEYFLVDDFKRETALRFLKNNGLSDDEAELVWNYFGGKPVYLAETIKHRDELKEWCERMLKLRTSQILDELYALEKELFEKVVKLFFAFEKQESVPYRSLSEEILWAVKRNILFAEPVDRVLRPQGRLELLAIKRILDIIE.

Residue 28 to 35 (GPINSGKT) coordinates ATP.

It belongs to the archaeal ATPase family.

This is an uncharacterized protein from Pyrococcus abyssi (strain GE5 / Orsay).